We begin with the raw amino-acid sequence, 483 residues long: Zinc metalloproteinase/disintegrin (483 aa).

The first 20 residues, 1-20 (MIQVLLVTICLAVFPYQGSS), serve as a signal peptide directing secretion. The propeptide occupies 21-190 (IILESGNVND…KASQLYLTPE (170 aa)). Residues 197–395 (RYIELAIVVD…RNPQCILNAP (199 aa)) form the Peptidase M12B domain. Residue glutamate 200 coordinates Ca(2+). Asparagine 263 carries N-linked (GlcNAc...) asparagine glycosylation. Position 284 (aspartate 284) interacts with Ca(2+). N-linked (GlcNAc...) asparagine glycosylation is present at asparagine 293. 3 disulfide bridges follow: cysteine 308/cysteine 390, cysteine 352/cysteine 374, and cysteine 354/cysteine 357. Residue histidine 333 coordinates Zn(2+). Residue glutamate 334 is part of the active site. Residues histidine 337 and histidine 343 each coordinate Zn(2+). 2 residues coordinate Ca(2+): cysteine 390 and asparagine 393. Residues 396–413 (LRTDTVSTPVSGNEFLEA) constitute a propeptide that is removed on maturation. In terms of domain architecture, Disintegrin spans 403 to 483 (TPVSGNEFLE…SNDCPRWNDL (81 aa)). Intrachain disulfides connect cysteine 417–cysteine 432, cysteine 419–cysteine 427, cysteine 426–cysteine 449, cysteine 440–cysteine 446, cysteine 445–cysteine 470, and cysteine 458–cysteine 477. A Cell attachment site motif is present at residues 462 to 464 (RGD).

Belongs to the venom metalloproteinase (M12B) family. P-II subfamily. P-IIa sub-subfamily. In terms of assembly, monomeric (disintegrin). The cofactor is Zn(2+). Expressed by the venom gland.

The protein localises to the secreted. Functionally, impairs hemostasis in the envenomed animal. Inhibits platelet aggregation induced by ADP, thrombin, platelet-activating factor and collagen. Acts by inhibiting fibrinogen interaction with platelet receptors GPIIb/GPIIIa (ITGA2B/ITGB3). The polypeptide is Zinc metalloproteinase/disintegrin (Protobothrops flavoviridis (Habu)).